We begin with the raw amino-acid sequence, 307 residues long: Mycothiol acetyltransferase (307 aa).

2 N-acetyltransferase domains span residues 12–157 and 160–307; these read TRTD…PPLP and VTLR…YQLG. Glutamate 43 contributes to the 1D-myo-inositol 2-(L-cysteinylamino)-2-deoxy-alpha-D-glucopyranoside binding site. 87-89 contacts acetyl-CoA; it reads LAV. 1D-myo-inositol 2-(L-cysteinylamino)-2-deoxy-alpha-D-glucopyranoside contacts are provided by glutamate 187, lysine 227, and glutamate 239. Acetyl-CoA-binding positions include 243–245 and 250–256; these read LGV and HGGGLGK. Tyrosine 278 is a 1D-myo-inositol 2-(L-cysteinylamino)-2-deoxy-alpha-D-glucopyranoside binding site.

It belongs to the acetyltransferase family. MshD subfamily. As to quaternary structure, monomer.

The enzyme catalyses 1D-myo-inositol 2-(L-cysteinylamino)-2-deoxy-alpha-D-glucopyranoside + acetyl-CoA = mycothiol + CoA + H(+). Functionally, catalyzes the transfer of acetyl from acetyl-CoA to desacetylmycothiol (Cys-GlcN-Ins) to form mycothiol. The chain is Mycothiol acetyltransferase from Salinispora tropica (strain ATCC BAA-916 / DSM 44818 / JCM 13857 / NBRC 105044 / CNB-440).